The following is a 395-amino-acid chain: Succinyl-diaminopimelate desuccinylase 2 (395 aa).

H79 lines the Zn(2+) pocket. D81 is a catalytic residue. D112 is a Zn(2+) binding site. E145 functions as the Proton acceptor in the catalytic mechanism. Positions 146, 174, and 363 each coordinate Zn(2+).

Belongs to the peptidase M20A family. DapE subfamily. In terms of assembly, homodimer. It depends on Zn(2+) as a cofactor. Co(2+) serves as cofactor.

It carries out the reaction N-succinyl-(2S,6S)-2,6-diaminopimelate + H2O = (2S,6S)-2,6-diaminopimelate + succinate. Its pathway is amino-acid biosynthesis; L-lysine biosynthesis via DAP pathway; LL-2,6-diaminopimelate from (S)-tetrahydrodipicolinate (succinylase route): step 3/3. In terms of biological role, catalyzes the hydrolysis of N-succinyl-L,L-diaminopimelic acid (SDAP), forming succinate and LL-2,6-diaminopimelate (DAP), an intermediate involved in the bacterial biosynthesis of lysine and meso-diaminopimelic acid, an essential component of bacterial cell walls. In Ruegeria sp. (strain TM1040) (Silicibacter sp.), this protein is Succinyl-diaminopimelate desuccinylase 2.